A 90-amino-acid polypeptide reads, in one-letter code: Small ribosomal subunit protein uS19 (90 aa).

Belongs to the universal ribosomal protein uS19 family.

Its function is as follows. Protein S19 forms a complex with S13 that binds strongly to the 16S ribosomal RNA. The sequence is that of Small ribosomal subunit protein uS19 from Nitrosococcus oceani (strain ATCC 19707 / BCRC 17464 / JCM 30415 / NCIMB 11848 / C-107).